Reading from the N-terminus, the 178-residue chain is Protein FLOWERING LOCUS T 1 (178 aa).

Belongs to the phosphatidylethanolamine-binding protein family. As to expression, expressed in leaves but not in shoot apex.

Involved in the regulation of vernalization and of flowering time. This chain is Protein FLOWERING LOCUS T 1, found in Brachypodium distachyon (Purple false brome).